The primary structure comprises 123 residues: Small ribosomal subunit protein uS13 (123 aa).

A disordered region spans residues 95 to 123 (GLPVRGQSSKTNARTRKGPRRSVMSRKKK). The span at 107-123 (ARTRKGPRRSVMSRKKK) shows a compositional bias: basic residues.

Belongs to the universal ribosomal protein uS13 family. As to quaternary structure, part of the 30S ribosomal subunit. Forms a loose heterodimer with protein S19. Forms two bridges to the 50S subunit in the 70S ribosome.

In terms of biological role, located at the top of the head of the 30S subunit, it contacts several helices of the 16S rRNA. In the 70S ribosome it contacts the 23S rRNA (bridge B1a) and protein L5 of the 50S subunit (bridge B1b), connecting the 2 subunits; these bridges are implicated in subunit movement. Contacts the tRNAs in the A and P-sites. This is Small ribosomal subunit protein uS13 from Maridesulfovibrio salexigens (strain ATCC 14822 / DSM 2638 / NCIMB 8403 / VKM B-1763) (Desulfovibrio salexigens).